The primary structure comprises 250 residues: uncharacterized protein (250 aa).

Residues 4-24 form a helical membrane-spanning segment; it reads FKYLLFLVVFAVFFLTFAFFD.

The protein localises to the membrane. This is an uncharacterized protein from Methanocaldococcus jannaschii (strain ATCC 43067 / DSM 2661 / JAL-1 / JCM 10045 / NBRC 100440) (Methanococcus jannaschii).